The chain runs to 91 residues: ATP synthase subunit c (91 aa).

The next 2 helical transmembrane spans lie at 4-24 and 53-73; these read FTMC…GTGI and IGLA…LIIL.

It belongs to the ATPase C chain family. As to quaternary structure, F-type ATPases have 2 components, F(1) - the catalytic core - and F(0) - the membrane proton channel. F(1) has five subunits: alpha(3), beta(3), gamma(1), delta(1), epsilon(1). F(0) has three main subunits: a(1), b(2) and c(10-14). The alpha and beta chains form an alternating ring which encloses part of the gamma chain. F(1) is attached to F(0) by a central stalk formed by the gamma and epsilon chains, while a peripheral stalk is formed by the delta and b chains.

It localises to the cell inner membrane. Its function is as follows. F(1)F(0) ATP synthase produces ATP from ADP in the presence of a proton or sodium gradient. F-type ATPases consist of two structural domains, F(1) containing the extramembraneous catalytic core and F(0) containing the membrane proton channel, linked together by a central stalk and a peripheral stalk. During catalysis, ATP synthesis in the catalytic domain of F(1) is coupled via a rotary mechanism of the central stalk subunits to proton translocation. Key component of the F(0) channel; it plays a direct role in translocation across the membrane. A homomeric c-ring of between 10-14 subunits forms the central stalk rotor element with the F(1) delta and epsilon subunits. This chain is ATP synthase subunit c, found in Geobacter sulfurreducens (strain ATCC 51573 / DSM 12127 / PCA).